The sequence spans 122 residues: Venom protein 7.1 (122 aa).

The signal sequence occupies residues 1-19 (MRFSIISASLVLIFANVKA).

In terms of processing, contains 3 disulfide bonds. As to expression, expressed by the venom gland.

Its subcellular location is the secreted. This is Venom protein 7.1 from Lychas mucronatus (Chinese swimming scorpion).